The chain runs to 337 residues: DNA-directed RNA polymerase subunit alpha (337 aa).

The segment at Met1–Lys233 is alpha N-terminal domain (alpha-NTD). Positions Phe249–Tyr337 are alpha C-terminal domain (alpha-CTD).

It belongs to the RNA polymerase alpha chain family. In terms of assembly, homodimer. The RNAP catalytic core consists of 2 alpha, 1 beta, 1 beta' and 1 omega subunit. When a sigma factor is associated with the core the holoenzyme is formed, which can initiate transcription.

It catalyses the reaction RNA(n) + a ribonucleoside 5'-triphosphate = RNA(n+1) + diphosphate. In terms of biological role, DNA-dependent RNA polymerase catalyzes the transcription of DNA into RNA using the four ribonucleoside triphosphates as substrates. This chain is DNA-directed RNA polymerase subunit alpha, found in Bartonella bacilliformis (strain ATCC 35685 / KC583 / Herrer 020/F12,63).